Here is a 570-residue protein sequence, read N- to C-terminus: Molecular chaperone MKKS (570 aa).

An ATP-binding site is contributed by 192–199 (GHIILGKS). The interval 198 to 370 (KSLIVPLKGQ…FHLIPNEATI (173 aa)) is substrate-binding apical domain.

Belongs to the TCP-1 chaperonin family. Component of a complex composed at least of MKKS, BBS10, BBS12, TCP1, CCT2, CCT3, CCT4, CCT5 and CCT8. Interacts with STUB1. Interacts with BBS2 (via coiled coil domain). Interacts with CCDC28B. Interacts with BBS12. Interacts with SMARCC1, a component of the SWI/SNF complexes; the interaction takes place predominantly in the cytoplasm and may modulate SMARCC1 location. Interacts with DLEC1. As to expression, widely expressed in adult and fetal tissues.

The protein localises to the cytoplasm. Its subcellular location is the cytoskeleton. It is found in the microtubule organizing center. It localises to the centrosome. The protein resides in the cytosol. The protein localises to the nucleus. Probable molecular chaperone that assists the folding of proteins upon ATP hydrolysis. Plays a role in the assembly of BBSome, a complex involved in ciliogenesis regulating transports vesicles to the cilia. May play a role in protein processing in limb, cardiac and reproductive system development. May play a role in cytokinesis. The protein is Molecular chaperone MKKS of Homo sapiens (Human).